Reading from the N-terminus, the 230-residue chain is Phosphoenolpyruvate guanylyltransferase (230 aa).

Positions 139, 155, and 158 each coordinate phosphoenolpyruvate.

It belongs to the CofC family.

It catalyses the reaction phosphoenolpyruvate + GTP + H(+) = enolpyruvoyl-2-diphospho-5'-guanosine + diphosphate. It participates in cofactor biosynthesis; coenzyme F420 biosynthesis. Guanylyltransferase that catalyzes the activation of phosphoenolpyruvate (PEP) as enolpyruvoyl-2-diphospho-5'-guanosine, via the condensation of PEP with GTP. It is involved in the biosynthesis of coenzyme F420, a hydride carrier cofactor. In Thermobaculum terrenum (strain ATCC BAA-798 / CCMEE 7001 / YNP1), this protein is Phosphoenolpyruvate guanylyltransferase.